The primary structure comprises 75 residues: Brevinin-2SN1 (75 aa).

The signal sequence occupies residues 1-22 (MFTMKKPLLFLFFLGTISLSFC). The propeptide at 23–40 (EEERGADEDDEVEMTEEE) is removed in mature form. A disulfide bridge links Cys69 with Cys75.

Belongs to the frog skin active peptide (FSAP) family. Brevinin subfamily. Expressed by the skin glands.

It localises to the secreted. Its function is as follows. Antimicrobial peptide. Active against some Gram-negative and a variety of Gram-positive bacterial strains. Active against fungus C.glabrata 090902 but not against C.albicans ATCC 10231. Shows hemolytic activity against human erythrocytes. The sequence is that of Brevinin-2SN1 from Sylvirana spinulosa (Fine-spined frog).